A 403-amino-acid chain; its full sequence is Glycerophosphocholine acyltransferase 1 (403 aa).

Topologically, residues 1-112 (MDHLEFDENT…SGKVVRFRDK (112 aa)) are cytoplasmic. A helical transmembrane segment spans residues 113 to 133 (LSFALGVSTCILTALLVGMAP). The Lumenal portion of the chain corresponds to 134–137 (ESMH). A helical transmembrane segment spans residues 138-155 (LWYTIQLFVYLPLRYYTY). The Cytoplasmic segment spans residues 156-161 (QRKGYE). A helical membrane pass occupies residues 162-182 (YFIADFCYWGNILLLVYIWIF). At 183 to 186 (PESR) the chain is on the lumenal side. A helical membrane pass occupies residues 187 to 207 (RLFILSYSISYGTLAWSVVAW). The Cytoplasmic segment spans residues 208-218 (RNSLLFHSIDK). The helical transmembrane segment at 219–239 (ITSLFIHFFPPLVLHTIVHLT) threads the bilayer. An N-linked (GlcNAc...) asparagine glycan is attached at asparagine 240. Residues 240–262 (NKSYLKDRFPAVLKVKKIDLLSS) lie on the Lumenal side of the membrane. The chain crosses the membrane as a helical span at residues 263–283 (VEIASFFYALWQIWYYFFIQV). Residues 284 to 322 (GKQKQIQEGRPTSFTWLSKAYSKTKLGRAVAKLPQNLQP) lie on the Cytoplasmic side of the membrane. The helical transmembrane segment at 323-343 (FVFMIIQYLYSITTMLPCSLW) threads the bilayer. The Lumenal segment spans residues 344–352 (YNNKLYSTA). A helical transmembrane segment spans residues 353–373 (FLALIFGWSVWNGASYYIDVF). Residues 374 to 403 (GRRFQKELEALRQQLAETPTNSGSSSALSR) lie on the Cytoplasmic side of the membrane.

Belongs to the GPC1 family.

It localises to the endoplasmic reticulum membrane. The protein resides in the golgi apparatus membrane. It catalyses the reaction sn-glycerol 3-phosphocholine + an acyl-CoA = a 1-acyl-sn-glycero-3-phosphocholine + CoA. The enzyme catalyses sn-glycero-3-phosphoethanolamine + an acyl-CoA = a monoacyl-sn-glycero-3-phosphoethanolamine + CoA. The catalysed reaction is sn-glycero-3-phosphoethanolamine + (9Z)-octadecenoyl-CoA = (9Z-octadecenoyl)-sn-glycero-3-phosphoethanolamine + CoA. In terms of biological role, glycerophosphocholine acyltransferase (GPCAT) that utilizes acyl-CoA to acylate glycero-3-phosphocholine (GPC), forming lysophosphatidylcholine (LPC). Shows broad acyl specificities with a preference for 16:0-CoA, polyunsaturated acyl-CoA, and the hydroxylated ricinoleoyl-CoA. Also catalyzes the acylation of glycero-3-phosphoethanolamine (GPE) with acyl-CoA. In addition to acyl-CoA, GPCAT efficiently utilizes LPC and lysophosphatidylethanolamine (LPE) as acyl donors in the acylation of GPC. Contributes to the maintenance of phosphatidylcholine (PC) homeostasis and might also have specific functions in acyl editing of PC, such as transferring acyl groups modified at the sn-2 position of PC to the sn-1. In Schizosaccharomyces pombe (strain 972 / ATCC 24843) (Fission yeast), this protein is Glycerophosphocholine acyltransferase 1.